The primary structure comprises 308 residues: Glutamyl-Q tRNA(Asp) synthetase (308 aa).

L-glutamate-binding positions include 19–23 and E55; that span reads RFAPS. A 'HIGH' region motif is present at residues 22-32; sequence PSPSGELHFGS. Zn(2+)-binding residues include C111, C113, Y125, and C129. The L-glutamate site is built by Y182 and R200. A 'KMSKS' region motif is present at residues 238–242; it reads KLSKQ. K241 lines the ATP pocket.

It belongs to the class-I aminoacyl-tRNA synthetase family. GluQ subfamily. The cofactor is Zn(2+).

In terms of biological role, catalyzes the tRNA-independent activation of glutamate in presence of ATP and the subsequent transfer of glutamate onto a tRNA(Asp). Glutamate is transferred on the 2-amino-5-(4,5-dihydroxy-2-cyclopenten-1-yl) moiety of the queuosine in the wobble position of the QUC anticodon. This chain is Glutamyl-Q tRNA(Asp) synthetase, found in Shigella flexneri.